Reading from the N-terminus, the 240-residue chain is Uridylate kinase (240 aa).

14–17 (KLSG) is a binding site for ATP. Position 56 (G56) interacts with UMP. Residues G57 and R61 each contribute to the ATP site. UMP-binding positions include D76 and 137–144 (TGNPFFTT). ATP contacts are provided by T164, Y170, and D173.

Belongs to the UMP kinase family. As to quaternary structure, homohexamer.

It is found in the cytoplasm. The enzyme catalyses UMP + ATP = UDP + ADP. The protein operates within pyrimidine metabolism; CTP biosynthesis via de novo pathway; UDP from UMP (UMPK route): step 1/1. With respect to regulation, inhibited by UTP. In terms of biological role, catalyzes the reversible phosphorylation of UMP to UDP. The protein is Uridylate kinase of Acidovorax sp. (strain JS42).